The following is a 546-amino-acid chain: Arginine--tRNA ligase (546 aa).

The 'HIGH' region signature appears at 122 to 132; that stretch reads ANPTGPFTVGH.

It belongs to the class-I aminoacyl-tRNA synthetase family. Monomer.

The protein localises to the cytoplasm. The catalysed reaction is tRNA(Arg) + L-arginine + ATP = L-arginyl-tRNA(Arg) + AMP + diphosphate. This Thermotoga petrophila (strain ATCC BAA-488 / DSM 13995 / JCM 10881 / RKU-1) protein is Arginine--tRNA ligase.